We begin with the raw amino-acid sequence, 412 residues long: uncharacterized protein (412 aa).

11 helical membrane passes run 17–37, 54–74, 91–111, 112–132, 146–166, 173–193, 225–245, 257–277, 299–319, 346–366, and 375–395; these read LLLA…ELVI, VLAL…PLLV, MIFI…FFFL, GRAL…AVVG, LIVS…SFIG, WTFW…LLEM, VYIT…SFLG, TAAG…VITG, LLAC…SLFI, VMVF…ALMG, and AAVG…SVFA.

The protein belongs to the major facilitator superfamily.

Its subcellular location is the cell membrane. This is an uncharacterized protein from Bacillus subtilis (strain 168).